A 181-amino-acid chain; its full sequence is ADP-ribosylation factor 1 (181 aa).

Gly-2 carries the N-myristoyl glycine lipid modification. GTP is bound by residues 24-31 (GLDAAGKT), 67-71 (DVGGQ), and 126-129 (NKQD).

Belongs to the small GTPase superfamily. Arf family. In terms of tissue distribution, seedling shoots.

It is found in the golgi apparatus. The catalysed reaction is GTP + H2O = GDP + phosphate + H(+). In terms of biological role, GTP-binding protein involved in protein trafficking; may modulate vesicle budding and uncoating within the Golgi apparatus. In Oryza sativa subsp. japonica (Rice), this protein is ADP-ribosylation factor 1.